We begin with the raw amino-acid sequence, 265 residues long: Small ribosomal subunit protein uS2 (265 aa).

Positions 231 to 265 (VEEEYEDYEGAEDDYEYDETEYTDSVIPDDEEEAE) are disordered.

The protein belongs to the universal ribosomal protein uS2 family.

The sequence is that of Small ribosomal subunit protein uS2 from Trichormus variabilis (strain ATCC 29413 / PCC 7937) (Anabaena variabilis).